Consider the following 525-residue polypeptide: Ent-kaurene oxidase (525 aa).

Residues 31 to 51 (VHWLIYVAFGAWLCSYVIHVL) form a helical membrane-spanning segment. Cys466 provides a ligand contact to heme.

The protein belongs to the cytochrome P450 family. Heme is required as a cofactor.

The protein localises to the membrane. It carries out the reaction ent-kaur-16-ene + 3 reduced [NADPH--hemoprotein reductase] + 3 O2 = ent-kaur-16-en-19-oate + 3 oxidized [NADPH--hemoprotein reductase] + 4 H2O + 4 H(+). It participates in plant hormone biosynthesis; gibberellin biosynthesis. In terms of biological role, catalyzes three successive oxidations of the 4-methyl group of ent-kaurene giving kaurenoic acid, a key step in gibberellin (GA) biosynthesis. The chain is Ent-kaurene oxidase (CYP503A1) from Gibberella intermedia (Bulb rot disease fungus).